Reading from the N-terminus, the 440-residue chain is D-serine dehydratase (440 aa).

K116 is subject to N6-(pyridoxal phosphate)lysine.

It belongs to the serine/threonine dehydratase family. DsdA subfamily. Monomer. Pyridoxal 5'-phosphate serves as cofactor.

The catalysed reaction is D-serine = pyruvate + NH4(+). This Salmonella arizonae (strain ATCC BAA-731 / CDC346-86 / RSK2980) protein is D-serine dehydratase.